The primary structure comprises 78 residues: Exodeoxyribonuclease 7 small subunit (78 aa).

It belongs to the XseB family. Heterooligomer composed of large and small subunits.

The protein localises to the cytoplasm. It catalyses the reaction Exonucleolytic cleavage in either 5'- to 3'- or 3'- to 5'-direction to yield nucleoside 5'-phosphates.. Bidirectionally degrades single-stranded DNA into large acid-insoluble oligonucleotides, which are then degraded further into small acid-soluble oligonucleotides. The chain is Exodeoxyribonuclease 7 small subunit from Idiomarina loihiensis (strain ATCC BAA-735 / DSM 15497 / L2-TR).